A 197-amino-acid polypeptide reads, in one-letter code: Histone chaperone asf1b-A (197 aa).

The protein belongs to the ASF1 family. In terms of assembly, interacts with histone H3 and histone H4.

Its subcellular location is the nucleus. Its function is as follows. Histone chaperone that facilitates histone deposition and histone exchange and removal during nucleosome assembly and disassembly. This is Histone chaperone asf1b-A (asf1ba) from Danio rerio (Zebrafish).